Reading from the N-terminus, the 203-residue chain is CASP-like protein 2U2 (203 aa).

The segment at 1–21 (MGGFVDDGAAGLAPSHGSSRA) is disordered. Topologically, residues 1-27 (MGGFVDDGAAGLAPSHGSSRAGRGLEG) are cytoplasmic. A helical membrane pass occupies residues 28–48 (AGVFLRFVASLLSIAGLMLLV). The Extracellular segment spans residues 49-73 (KDNQTVQQMVATEAVTLETKYSDIS). Asn51 carries N-linked (GlcNAc...) asparagine glycosylation. Residues 74–94 (AFVFLLYTNGLVAVYCFFLAL) form a helical membrane-spanning segment. Over 95–108 (ASVFSLIASARSGK) the chain is Cytoplasmic. The chain crosses the membrane as a helical span at residues 109-129 (LAGWVTFVLDQGLAYVLLAAA). Residues 130 to 163 (AASTEVLYLAENGDLKTSWAEICSQFGHFCHMAR) lie on the Extracellular side of the membrane. The chain crosses the membrane as a helical span at residues 164-184 (ASIVVSFLSMLAMAVLSVMSA). Residues 185–203 (QQLFSKYRRPMTAKTAQDI) are Cytoplasmic-facing.

This sequence belongs to the Casparian strip membrane proteins (CASP) family. Homodimer and heterodimers.

Its subcellular location is the cell membrane. This is CASP-like protein 2U2 from Osmunda lancea (Fern).